The primary structure comprises 250 residues: Functional amyloid sbunit FapE (250 aa).

The N-terminal stretch at 1–27 (MLREHAMYTHHCFVLACCLGAALPAPA) is a signal peptide.

Belongs to the FapE family. As to quaternary structure, a minor component of purified amyloid fibrils. Fibrils are resistant to boiling in 2% (weight/vol) SDS and require &gt;90% (vol/vol) formic acid to dissolve.

It is found in the fimbrium. The protein resides in the secreted. Functionally, a minor component of the functional amyloid in this bacterium. Upon overexpression of the endogenous six-gene locus (fapA-fapF), cells form large clumps during liquid growth, make large amounts of biofilm and produce amyloid fibrils. In Pseudomonas aeruginosa (strain ATCC 15692 / DSM 22644 / CIP 104116 / JCM 14847 / LMG 12228 / 1C / PRS 101 / PAO1), this protein is Functional amyloid sbunit FapE.